The chain runs to 299 residues: tRNA dimethylallyltransferase (299 aa).

13-20 (GPTASGKT) lines the ATP pocket. 15–20 (TASGKT) lines the substrate pocket. The interaction with substrate tRNA stretch occupies residues 38-41 (DSRQ).

This sequence belongs to the IPP transferase family. In terms of assembly, monomer. Mg(2+) is required as a cofactor.

The catalysed reaction is adenosine(37) in tRNA + dimethylallyl diphosphate = N(6)-dimethylallyladenosine(37) in tRNA + diphosphate. Catalyzes the transfer of a dimethylallyl group onto the adenine at position 37 in tRNAs that read codons beginning with uridine, leading to the formation of N6-(dimethylallyl)adenosine (i(6)A). This is tRNA dimethylallyltransferase from Prochlorococcus marinus (strain MIT 9515).